The following is a 213-amino-acid chain: U1 small nuclear ribonucleoprotein C (213 aa).

The segment at 4-36 adopts a Matrin-type zinc-finger fold; the sequence is YYCDYCDTYLTHDSPSVRKQHNAGYKHKANVRS. Positions 143 to 166 are enriched in pro residues; it reads APSMPMPPLNSLPRPPTMNVPPAV. Residues 143 to 213 are disordered; it reads APSMPMPPLN…INAQGPEANH (71 aa). Low complexity predominate over residues 167-180; the sequence is PGSTSTPTSGGAPS.

This sequence belongs to the U1 small nuclear ribonucleoprotein C family. In terms of assembly, U1 snRNP is composed of the 7 core Sm proteins B/B', D1, D2, D3, E, F and G that assemble in a heptameric protein ring on the Sm site of the small nuclear RNA to form the core snRNP, and at least 3 U1 snRNP-specific proteins U1-70K, U1-A and U1-C. U1-C interacts with U1 snRNA and the 5' splice-site region of the pre-mRNA.

It is found in the nucleus. In terms of biological role, component of the spliceosomal U1 snRNP, which is essential for recognition of the pre-mRNA 5' splice-site and the subsequent assembly of the spliceosome. U1-C is directly involved in initial 5' splice-site recognition for both constitutive and regulated alternative splicing. The interaction with the 5' splice-site seems to precede base-pairing between the pre-mRNA and the U1 snRNA. Stimulates commitment or early (E) complex formation by stabilizing the base pairing of the 5' end of the U1 snRNA and the 5' splice-site region. The sequence is that of U1 small nuclear ribonucleoprotein C from Vitis vinifera (Grape).